We begin with the raw amino-acid sequence, 931 residues long: Bifunctional uridylyltransferase/uridylyl-removing enzyme (931 aa).

A uridylyltransferase region spans residues 1 to 383 (MDSVTPNSRP…KTGNSWRRVP (383 aa)). Residues 384 to 739 (ESDDFIVDNN…VGFDPARGVT (356 aa)) are uridylyl-removing. One can recognise an HD domain in the interval 499 to 622 (VDEHLIRCIG…VQSVEQMKLL (124 aa)). 2 ACT domains span residues 740–822 (ELTI…AVAR) and 851–931 (VIEV…QPAA).

This sequence belongs to the GlnD family. It depends on Mg(2+) as a cofactor.

It carries out the reaction [protein-PII]-L-tyrosine + UTP = [protein-PII]-uridylyl-L-tyrosine + diphosphate. The catalysed reaction is [protein-PII]-uridylyl-L-tyrosine + H2O = [protein-PII]-L-tyrosine + UMP + H(+). Its activity is regulated as follows. Uridylyltransferase (UTase) activity is inhibited by glutamine, while glutamine activates uridylyl-removing (UR) activity. Modifies, by uridylylation and deuridylylation, the PII regulatory proteins (GlnB and homologs), in response to the nitrogen status of the cell that GlnD senses through the glutamine level. Under low glutamine levels, catalyzes the conversion of the PII proteins and UTP to PII-UMP and PPi, while under higher glutamine levels, GlnD hydrolyzes PII-UMP to PII and UMP (deuridylylation). Thus, controls uridylylation state and activity of the PII proteins, and plays an important role in the regulation of nitrogen fixation and metabolism. The polypeptide is Bifunctional uridylyltransferase/uridylyl-removing enzyme (Bradyrhizobium sp. (strain BTAi1 / ATCC BAA-1182)).